The following is a 185-amino-acid chain: Neuronal vesicle trafficking-associated protein 1 (185 aa).

At 1–82 (MVKLGNNFAE…ITEGVTERFK (82 aa)) the chain is on the cytoplasmic side. A helical; Signal-anchor for type II membrane protein transmembrane segment spans residues 83 to 103 (VSVLVLFALAFLTCVVFLVVY). The Lumenal segment spans residues 104 to 185 (KVYKYDRACP…QETEAAEKSA (82 aa)). Residues 129 to 164 (ESYYTEQDSSAREKFYTVINHYNLAKQSITRSVSPW) are required for GRIP1 interaction.

The protein belongs to the NSG family. Forms a complex with GRIP1, GRIA2 and STX12; controls the intracellular fate of AMPAR and the endosomal sorting of the GRIA2 subunit toward recycling and membrane targeting. Interacts with GRIP1. Interacts with STX12. Interacts with APP; could regulate APP processing. Interacts with FAM171A1. In terms of tissue distribution, widely expressed in brain and spinal cord. Expressed in neurons during maturation and synapse formation.

The protein localises to the membrane. Its subcellular location is the golgi apparatus. It localises to the trans-Golgi network membrane. The protein resides in the endosome membrane. It is found in the cell projection. The protein localises to the dendrite. Its subcellular location is the early endosome membrane. It localises to the late endosome membrane. The protein resides in the lysosome lumen. It is found in the recycling endosome membrane. The protein localises to the cytoplasmic vesicle membrane. Its subcellular location is the golgi stack membrane. It localises to the endosome. The protein resides in the multivesicular body membrane. It is found in the endoplasmic reticulum membrane. Plays a role in the recycling mechanism in neurons of multiple receptors, including AMPAR, APP and L1CAM and acts at the level of early endosomes to promote sorting of receptors toward a recycling pathway. Regulates sorting and recycling of GRIA2 through interaction with GRIP1 and then contributes to the regulation of synaptic transmission and plasticity by affecting the recycling and targeting of AMPA receptors to the synapse. Is required for faithful sorting of L1CAM to axons by facilitating trafficking from somatodendritic early endosome or the recycling endosome. In an other hand, induces apoptosis via the activation of CASP3 in response to DNA damage. This Rattus norvegicus (Rat) protein is Neuronal vesicle trafficking-associated protein 1.